The sequence spans 550 residues: Carboxylesterase 4A (550 aa).

The first 20 residues, 1 to 20 (MNWILCLSLTLLLVVQTAWG), serve as a signal peptide directing secretion. Cys-88 and Cys-116 are disulfide-bonded. Catalysis depends on Ser-221, which acts as the Acyl-ester intermediate. An intrachain disulfide couples Cys-273 to Cys-284. An N-linked (GlcNAc...) asparagine glycan is attached at Asn-276. Catalysis depends on Glu-353, which acts as the Charge relay system. The N-linked (GlcNAc...) asparagine glycan is linked to Asn-386. The active-site Charge relay system is the His-465.

It belongs to the type-B carboxylesterase/lipase family.

The protein resides in the secreted. Functionally, probable carboxylesterase. This is Carboxylesterase 4A (CES4A) from Bos taurus (Bovine).